The primary structure comprises 365 residues: tRNA/tmRNA (uracil-C(5))-methyltransferase (365 aa).

5 residues coordinate S-adenosyl-L-methionine: Gln189, Tyr217, Asn222, Glu238, and Asp298. The active-site Nucleophile is the Cys323. The active-site Proton acceptor is Glu357.

Belongs to the class I-like SAM-binding methyltransferase superfamily. RNA M5U methyltransferase family. TrmA subfamily.

The catalysed reaction is uridine(54) in tRNA + S-adenosyl-L-methionine = 5-methyluridine(54) in tRNA + S-adenosyl-L-homocysteine + H(+). The enzyme catalyses uridine(341) in tmRNA + S-adenosyl-L-methionine = 5-methyluridine(341) in tmRNA + S-adenosyl-L-homocysteine + H(+). In terms of biological role, dual-specificity methyltransferase that catalyzes the formation of 5-methyluridine at position 54 (m5U54) in all tRNAs, and that of position 341 (m5U341) in tmRNA (transfer-mRNA). In Shewanella sp. (strain ANA-3), this protein is tRNA/tmRNA (uracil-C(5))-methyltransferase.